The chain runs to 137 residues: Large-conductance mechanosensitive channel (137 aa).

Helical transmembrane passes span 9-29, 32-52, 54-74, and 79-99; these read AFAV…GAAF, IVSS…IGGV, FGDL…VVLA, and IQSI…VKVI.

It belongs to the MscL family. In terms of assembly, homopentamer.

Its subcellular location is the cell inner membrane. Its function is as follows. Channel that opens in response to stretch forces in the membrane lipid bilayer. May participate in the regulation of osmotic pressure changes within the cell. This Pseudomonas fluorescens (strain ATCC BAA-477 / NRRL B-23932 / Pf-5) protein is Large-conductance mechanosensitive channel.